Here is a 532-residue protein sequence, read N- to C-terminus: Copalyl diphosphate synthase (532 aa).

The DXDDTA motif signature appears at 313-318; the sequence is DTDDTA. Positions 443-449 match the QXXDGSW motif motif; the sequence is QSDDGSW.

This sequence belongs to the terpene synthase family. It depends on Mg(2+) as a cofactor.

The catalysed reaction is (2E,6E,10E)-geranylgeranyl diphosphate = (+)-copalyl diphosphate. Involved in the biosynthesis of the mercapturic acid derivative diterpene cyslabdan A, a potentiator of the beta-lactam antibiotic imipenem. Catalyzes the conversion of geranylgeranyl diphosphate (GGDP) into (+)-copalyl diphosphate. The polypeptide is Copalyl diphosphate synthase (Streptomyces cyslabdanicus).